The chain runs to 436 residues: Glutamyl-tRNA(Gln) amidotransferase subunit D (436 aa).

The 330-residue stretch at 91–420 (QNISIISTGG…GEVAKLMNKN (330 aa)) folds into the Asparaginase/glutaminase domain. Active-site residues include threonine 101, threonine 177, aspartate 178, and lysine 254.

The protein belongs to the asparaginase 1 family. GatD subfamily. As to quaternary structure, heterodimer of GatD and GatE.

The catalysed reaction is L-glutamyl-tRNA(Gln) + L-glutamine + ATP + H2O = L-glutaminyl-tRNA(Gln) + L-glutamate + ADP + phosphate + H(+). Allows the formation of correctly charged Gln-tRNA(Gln) through the transamidation of misacylated Glu-tRNA(Gln) in organisms which lack glutaminyl-tRNA synthetase. The reaction takes place in the presence of glutamine and ATP through an activated gamma-phospho-Glu-tRNA(Gln). The GatDE system is specific for glutamate and does not act on aspartate. In Methanobrevibacter smithii (strain ATCC 35061 / DSM 861 / OCM 144 / PS), this protein is Glutamyl-tRNA(Gln) amidotransferase subunit D.